A 297-amino-acid chain; its full sequence is MAGAQRVYKQRIRSTQTLKKMFRAMELIAASRITRAREHARAAAPYSRALTRAVSAVATHTQIDHPLTTDRADTNRVAMLVVTADRGQAGAYNTTILREAERLAAQLIEEGKEPQLYVTGRRGVGYYTFRHREIVKSWTGGSDNPEVSTAEEIADTLLEAFRAPVAEGGVSEIHLVYTRFASMVSQEPRVVRMLPLEVVEGVVEAGGDVLPLYEFEPSPEAVLDALLPRYIRSRVFNALLQASASELAARQRAMHTATENAEDLIRKYTRLANTARQAEITQEISEIVSGADAMAAS.

Belongs to the ATPase gamma chain family. As to quaternary structure, F-type ATPases have 2 components, CF(1) - the catalytic core - and CF(0) - the membrane proton channel. CF(1) has five subunits: alpha(3), beta(3), gamma(1), delta(1), epsilon(1). CF(0) has three main subunits: a, b and c.

The protein resides in the cell membrane. Its function is as follows. Produces ATP from ADP in the presence of a proton gradient across the membrane. The gamma chain is believed to be important in regulating ATPase activity and the flow of protons through the CF(0) complex. The protein is ATP synthase gamma chain of Beutenbergia cavernae (strain ATCC BAA-8 / DSM 12333 / CCUG 43141 / JCM 11478 / NBRC 16432 / NCIMB 13614 / HKI 0122).